The sequence spans 498 residues: Early growth response protein 1 (498 aa).

Disordered regions lie at residues 137–203 (NASP…TASI) and 287–308 (PSRM…RPYA). A compositionally biased stretch (low complexity) spans 139–163 (SPSSAPSSSPSSSSSSSQSPPLSCS). Residues 179–202 (FPNSSPELFPDQSPQPFQNASTAS) are compositionally biased toward polar residues. 3 consecutive C2H2-type zinc fingers follow at residues 307-331 (YACP…IRIH), 337-359 (FQCR…IRTH), and 365-387 (FACD…TKIH). The interval 378–422 (DERKRHTKIHLRQKDKKADKATPVSVASPVSSYSPSASTSYPSPV) is disordered. Residues 382–392 (RHTKIHLRQKD) are compositionally biased toward basic residues. Over residues 398-422 (ATPVSVASPVSSYSPSASTSYPSPV) the composition is skewed to low complexity.

Belongs to the EGR C2H2-type zinc-finger protein family.

The protein resides in the nucleus. It localises to the cytoplasm. Transcriptional regulator. Recognizes and binds to the DNA sequence 5'-GCG(T/G)GGGCG-3'(EGR-site) in the promoter region of target genes. Binds double-stranded target DNA, irrespective of the cytosine methylation status. Regulates the transcription of numerous target genes, and thereby plays an important role in regulating the response to growth factors, DNA damage, and ischemia. Plays a role in the regulation of cell survival, proliferation and cell death. Mediates responses to ischemia and hypoxia; regulates the expression of proteins that are involved in inflammatory processes. Plays a role in regulating the expression of circadian clock genes. The polypeptide is Early growth response protein 1 (Xenopus tropicalis (Western clawed frog)).